Here is an 89-residue protein sequence, read N- to C-terminus: Endoribonuclease VapD 1 (89 aa).

This sequence belongs to the VapD ribonuclease family. In terms of assembly, homodimer.

Its function is as follows. Cleaves ssRNA, mostly between U:A. The chain is Endoribonuclease VapD 1 from Riemerella anatipestifer (Moraxella anatipestifer).